Consider the following 201-residue polypeptide: Cell division protein SepF (201 aa).

The interval 1–94 is disordered; it reads MALKDLFSGF…TTSKNNARNV (94 aa). The segment covering 13–28 has biased composition (acidic residues); that stretch reads VEEEDDELEAPPEENE. Residues 35–44 show a composition bias toward low complexity; that stretch reads PKQQAQSQNQ. A compositionally biased stretch (polar residues) spans 59–88; that stretch reads SIQSVPKKQSTRLQQSSGERKYQMNNTTSK.

The protein belongs to the SepF family. In terms of assembly, homodimer. Interacts with FtsZ.

The protein resides in the cytoplasm. Its function is as follows. Cell division protein that is part of the divisome complex and is recruited early to the Z-ring. Probably stimulates Z-ring formation, perhaps through the cross-linking of FtsZ protofilaments. Its function overlaps with FtsA. This Staphylococcus saprophyticus subsp. saprophyticus (strain ATCC 15305 / DSM 20229 / NCIMB 8711 / NCTC 7292 / S-41) protein is Cell division protein SepF.